We begin with the raw amino-acid sequence, 229 residues long: NADH dehydrogenase [ubiquinone] iron-sulfur protein 8, mitochondrial (229 aa).

The transit peptide at 1–41 (MAAILARKSLSALRSRQLVLAGHTIEGTNGYNRTLLGTRSF) directs the protein to the mitochondrion. 4Fe-4S ferredoxin-type domains lie at 121–150 (RRYA…IEAE) and 160–189 (TRYD…EGPN). Residues cysteine 130, cysteine 133, cysteine 136, cysteine 140, cysteine 169, cysteine 172, cysteine 175, and cysteine 179 each coordinate [4Fe-4S] cluster.

It belongs to the complex I 23 kDa subunit family. Complex I is composed of about 45 different subunits. This is a component of the iron-sulfur (IP) fragment of the enzyme. It depends on [4Fe-4S] cluster as a cofactor. Lowest expression found in storage tissues of tubers. Higher expression in older leaves than younger ones. Highest expression found in flowers.

The protein resides in the mitochondrion inner membrane. The catalysed reaction is a ubiquinone + NADH + 5 H(+)(in) = a ubiquinol + NAD(+) + 4 H(+)(out). Core subunit of the mitochondrial membrane respiratory chain NADH dehydrogenase (Complex I) that is believed to belong to the minimal assembly required for catalysis. Complex I functions in the transfer of electrons from NADH to the respiratory chain. The immediate electron acceptor for the enzyme is believed to be ubiquinone. May donate electrons to ubiquinone. This is NADH dehydrogenase [ubiquinone] iron-sulfur protein 8, mitochondrial from Solanum tuberosum (Potato).